The chain runs to 141 residues: MAKKLVAVVKLAIQAGKATPAPPIGPALGQHGVNIMAFCKEYNAKTADQAGMVVPVEISIYEDRSFTFVLKTPPASVLIKKALGIESGSSEPHKVKVGSLTRAQLRQIAEQKLPDLNARDVEAAMKIIAGTARSMGVTIVD.

The protein belongs to the universal ribosomal protein uL11 family. Part of the ribosomal stalk of the 50S ribosomal subunit. Interacts with L10 and the large rRNA to form the base of the stalk. L10 forms an elongated spine to which L12 dimers bind in a sequential fashion forming a multimeric L10(L12)X complex. One or more lysine residues are methylated.

Forms part of the ribosomal stalk which helps the ribosome interact with GTP-bound translation factors. The sequence is that of Large ribosomal subunit protein uL11 from Synechococcus sp. (strain JA-3-3Ab) (Cyanobacteria bacterium Yellowstone A-Prime).